The following is a 324-amino-acid chain: Beta-ketoacyl-[acyl-carrier-protein] synthase III (324 aa).

Residues Cys114 and His251 contribute to the active site. Residues 252 to 256 form an ACP-binding region; sequence QANLR. Asn281 is an active-site residue.

This sequence belongs to the thiolase-like superfamily. FabH family. As to quaternary structure, homodimer.

Its subcellular location is the cytoplasm. It carries out the reaction malonyl-[ACP] + acetyl-CoA + H(+) = 3-oxobutanoyl-[ACP] + CO2 + CoA. Its pathway is lipid metabolism; fatty acid biosynthesis. Catalyzes the condensation reaction of fatty acid synthesis by the addition to an acyl acceptor of two carbons from malonyl-ACP. Catalyzes the first condensation reaction which initiates fatty acid synthesis and may therefore play a role in governing the total rate of fatty acid production. Possesses both acetoacetyl-ACP synthase and acetyl transacylase activities. Its substrate specificity determines the biosynthesis of branched-chain and/or straight-chain of fatty acids. This Rhodobacter capsulatus (Rhodopseudomonas capsulata) protein is Beta-ketoacyl-[acyl-carrier-protein] synthase III.